The following is a 786-amino-acid chain: MEGEGRGRWALGLLRTFDAGEFAGWEKVGSGGFGQVYKVRHVHWKTWLAIKCSPSLHVDDRERMELLEEAKKMEMAKFRYILPVYGICQEPVGLVMEYMETGSLEKLLASEPLPWDLRFRIVHETAVGMNFLHCMSPPLLHLDLKPANILLDAHYHVKISDFGLAKCNGMSHSHDLSMDGLFGTIAYLPPERIREKSRLFDTKHDVYSFAIVIWGVLTQKKPFADEKNILHIMMKVVKGHRPELPPICRPRPRACASLIGLMQRCWHADPQVRPTFQEITSETEDLCEKPDEEVKDLAHEPGEKSSLESKSEARPESSRLKRASAPPFDNDCSLSELLSQLDSGISQTLEGPEELSRSSSECKLPSSSSGKRLSGVSSVDSAFSSRGSLSLSFEREASTGDLGPTDIQKKKLVDAIISGDTSRLMKILQPQDVDLVLDSSASLLHLAVEAGQEECVKWLLLNNANPNLTNRKGSTPLHMAVERKGRGIVELLLARKTSVNAKDEDQWTALHFAAQNGDEASTRLLLEKNASVNEVDFEGRTPMHVACQHGQENIVRTLLRRGVDVGLQGKDAWLPLHYAAWQGHLPIVKLLAKQPGVSVNAQTLDGRTPLHLAAQRGHYRVARILIDLCSDVNICSLQAQTPLHVAAETGHTSTARLLLHRGAGKEALTSEGYTALHLAAQNGHLATVKLLIEEKADVMARGPLNQTALHLAAARGHSEVVEELVSADLIDLSDEQGLSALHLAAQGRHSQTVETLLKHGAHINLQSLKFQGGQSSAATLLRRSKT.

A Protein kinase domain is found at 22–286 (FAGWEKVGSG…QEITSETEDL (265 aa)). Residues 28–36 (VGSGGFGQV) and lysine 51 contribute to the ATP site. A Glycyl lysine isopeptide (Lys-Gly) (interchain with G-Cter in ubiquitin) cross-link involves residue lysine 51. Aspartate 143 functions as the Proton acceptor in the catalytic mechanism. Lysine 145 participates in a covalent cross-link: Glycyl lysine isopeptide (Lys-Gly) (interchain with G-Cter in ubiquitin). 2 disordered regions span residues 293–328 (EVKD…APPF) and 347–378 (QTLE…GVSS). Residues 295–319 (KDLAHEPGEKSSLESKSEARPESSR) show a composition bias toward basic and acidic residues. Positions 357–378 (RSSSECKLPSSSSGKRLSGVSS) are enriched in low complexity. ANK repeat units lie at residues 439–468 (SSAS…NPNL), 472–501 (KGST…SVNA), 505–534 (DQWT…SVNE), 538–567 (EGRT…DVGL), 571–601 (DAWL…SVNA), 605–634 (DGRT…DVNI), 638–667 (QAQT…GKEA), 671–700 (EGYT…DVMA), 704–734 (LNQT…DLSD), and 736–765 (QGLS…HINL).

This sequence belongs to the protein kinase superfamily. TKL Ser/Thr protein kinase family. Interacts with PRKCB. Interacts with TRAF1, TRAF2, TRAF3 and TRAF5. Interacts with BIRC2/c-IAP1, BIRC3/c-IAP2 and XIAP/BIRC4. Post-translationally, may be phosphorylated by MAP3K2 and MAP3K3. In terms of processing, proteolytically cleaved by during Fas-induced apoptosis. Cleavage at Asp-342 and Asp-380. Polyubiquitinated with 'Lys-48' and 'Lys-63'-linked chains by BIRC2/c-IAP1 and BIRC3/c-IAP2, leading to activation of NF-kappa-B. Expressed in the epidermis of the skin (at protein level). Ubiquitously expressed, with an abundant expression in the thymus, bone marrow, pro-B, pre-B and immature B cells and a weak expression in the spleen.

It is found in the cytoplasm. The protein localises to the membrane. It carries out the reaction L-seryl-[protein] + ATP = O-phospho-L-seryl-[protein] + ADP + H(+). The enzyme catalyses L-threonyl-[protein] + ATP = O-phospho-L-threonyl-[protein] + ADP + H(+). Its function is as follows. Serine/threonine protein kinase. Required for embryonic skin development and correct skin homeostasis in adults, via phosphorylation of PKP1 and subsequent promotion of keratinocyte differentiation and cell adhesion. It is a direct transcriptional target of TP63. Plays a role in NF-kappa-B activation. This Mus musculus (Mouse) protein is Receptor-interacting serine/threonine-protein kinase 4 (Ripk4).